A 210-amino-acid chain; its full sequence is Uridine kinase (210 aa).

An ATP-binding site is contributed by 13-20 (GGSGSGKT).

It belongs to the uridine kinase family.

Its subcellular location is the cytoplasm. It catalyses the reaction uridine + ATP = UMP + ADP + H(+). The enzyme catalyses cytidine + ATP = CMP + ADP + H(+). The protein operates within pyrimidine metabolism; CTP biosynthesis via salvage pathway; CTP from cytidine: step 1/3. It functions in the pathway pyrimidine metabolism; UMP biosynthesis via salvage pathway; UMP from uridine: step 1/1. This Oceanobacillus iheyensis (strain DSM 14371 / CIP 107618 / JCM 11309 / KCTC 3954 / HTE831) protein is Uridine kinase.